The primary structure comprises 478 residues: GTPase Obg (478 aa).

In terms of domain architecture, Obg spans 2–159; the sequence is TTFVDRVELH…RDIVLELKTV (158 aa). Residues 61 to 87 form a disordered region; it reads HHSPHRKATNGQPGAGDNRSGKDGQDL. Positions 160–330 constitute an OBG-type G domain; sequence ADVALVGYPS…LSFALAGIIA (171 aa). Residues 166 to 173, 191 to 195, 212 to 215, 282 to 285, and 311 to 313 contribute to the GTP site; these read GYPSAGKS, FTTLV, DVPG, NKVD, and SAI. The Mg(2+) site is built by S173 and T193. In terms of domain architecture, OCT spans 348–430; sequence PRAVDDAGFT…ENAVVFDWEP (83 aa). A disordered region spans residues 436 to 478; that stretch reads AEMLGRRGEDHRLEEPRPAAQRRRERDAERDDAEKEYDEFDPF. Over residues 439–468 the composition is skewed to basic and acidic residues; the sequence is LGRRGEDHRLEEPRPAAQRRRERDAERDDA. The span at 469-478 shows a compositional bias: acidic residues; it reads EKEYDEFDPF.

Belongs to the TRAFAC class OBG-HflX-like GTPase superfamily. OBG GTPase family. Monomer. It depends on Mg(2+) as a cofactor.

It localises to the cytoplasm. In terms of biological role, an essential GTPase which binds GTP, GDP and possibly (p)ppGpp with moderate affinity, with high nucleotide exchange rates and a fairly low GTP hydrolysis rate. Plays a role in control of the cell cycle, stress response, ribosome biogenesis and in those bacteria that undergo differentiation, in morphogenesis control. This is GTPase Obg from Streptomyces griseus subsp. griseus (strain JCM 4626 / CBS 651.72 / NBRC 13350 / KCC S-0626 / ISP 5235).